A 272-amino-acid polypeptide reads, in one-letter code: Acetylglutamate kinase (272 aa).

Substrate is bound by residues 41–42 (GG), Arg63, and Asn166.

This sequence belongs to the acetylglutamate kinase family. ArgB subfamily.

It localises to the cytoplasm. It carries out the reaction N-acetyl-L-glutamate + ATP = N-acetyl-L-glutamyl 5-phosphate + ADP. Its pathway is amino-acid biosynthesis; L-arginine biosynthesis; N(2)-acetyl-L-ornithine from L-glutamate: step 2/4. Its function is as follows. Catalyzes the ATP-dependent phosphorylation of N-acetyl-L-glutamate. In Anaeromyxobacter sp. (strain K), this protein is Acetylglutamate kinase.